Consider the following 315-residue polypeptide: Transmembrane protein 231 (315 aa).

The chain crosses the membrane as a helical span at residues 23–43 (AALFLLLTTALTYIPPLLVAF). Residues Asn-194, Asn-199, and Asn-221 are each glycosylated (N-linked (GlcNAc...) asparagine). Residues 262–282 (FWEMIKFAWIQYVSILLIFLW) form a helical membrane-spanning segment.

Belongs to the TMEM231 family. In terms of assembly, part of the tectonic-like complex (also named B9 complex). Interacts with TMEM107.

Its subcellular location is the cell projection. The protein localises to the cilium membrane. Its function is as follows. Transmembrane component of the tectonic-like complex, a complex localized at the transition zone of primary cilia and acting as a barrier that prevents diffusion of transmembrane proteins between the cilia and plasma membranes. Required for ciliogenesis and sonic hedgehog/SHH signaling. This is Transmembrane protein 231 (Tmem231) from Mus musculus (Mouse).